The chain runs to 289 residues: Glycine--tRNA ligase alpha subunit (289 aa).

It belongs to the class-II aminoacyl-tRNA synthetase family. In terms of assembly, tetramer of two alpha and two beta subunits.

It is found in the cytoplasm. The enzyme catalyses tRNA(Gly) + glycine + ATP = glycyl-tRNA(Gly) + AMP + diphosphate. This Prochlorococcus marinus (strain MIT 9515) protein is Glycine--tRNA ligase alpha subunit.